Consider the following 145-residue polypeptide: D-aminoacyl-tRNA deacylase (145 aa).

Positions 137–138 (GP) match the Gly-cisPro motif, important for rejection of L-amino acids motif.

Belongs to the DTD family. As to quaternary structure, homodimer.

The protein resides in the cytoplasm. It catalyses the reaction glycyl-tRNA(Ala) + H2O = tRNA(Ala) + glycine + H(+). The catalysed reaction is a D-aminoacyl-tRNA + H2O = a tRNA + a D-alpha-amino acid + H(+). Functionally, an aminoacyl-tRNA editing enzyme that deacylates mischarged D-aminoacyl-tRNAs. Also deacylates mischarged glycyl-tRNA(Ala), protecting cells against glycine mischarging by AlaRS. Acts via tRNA-based rather than protein-based catalysis; rejects L-amino acids rather than detecting D-amino acids in the active site. By recycling D-aminoacyl-tRNA to D-amino acids and free tRNA molecules, this enzyme counteracts the toxicity associated with the formation of D-aminoacyl-tRNA entities in vivo and helps enforce protein L-homochirality. The protein is D-aminoacyl-tRNA deacylase of Ectopseudomonas mendocina (strain ymp) (Pseudomonas mendocina).